Reading from the N-terminus, the 257-residue chain is Dihydroorotate dehydrogenase B (NAD(+)), electron transfer subunit (257 aa).

The region spanning 2–102 is the FAD-binding FR-type domain; sequence IGRERMTVVS…LGPLGHGFPL (101 aa). Residues 53–56, 70–72, and 77–78 contribute to the FAD site; these read RPLS, IYR, and GT. [2Fe-2S] cluster-binding residues include Cys221, Cys226, Cys229, and Cys244.

This sequence belongs to the PyrK family. As to quaternary structure, heterotetramer of 2 PyrK and 2 PyrD type B subunits. Requires [2Fe-2S] cluster as cofactor. It depends on FAD as a cofactor.

Its pathway is pyrimidine metabolism; UMP biosynthesis via de novo pathway; orotate from (S)-dihydroorotate (NAD(+) route): step 1/1. Its function is as follows. Responsible for channeling the electrons from the oxidation of dihydroorotate from the FMN redox center in the PyrD type B subunit to the ultimate electron acceptor NAD(+). The chain is Dihydroorotate dehydrogenase B (NAD(+)), electron transfer subunit from Geobacillus thermodenitrificans (strain NG80-2).